An 88-amino-acid chain; its full sequence is Eclosion hormone (88 aa).

The signal sequence occupies residues 1–26; that stretch reads MAGKVTVAFFMFAMIAFLANFGYVEC. Disulfide bonds link Cys-40/Cys-64, Cys-44/Cys-60, and Cys-47/Cys-75.

The protein belongs to the insect eclosion hormone family.

It is found in the secreted. Functionally, neuropeptide that triggers the performance of ecdysis behaviors at the end of a molt. It triggers adult behavior patterns: larval, pupal and adult ecdysis, and plasticization during the molt. The sequence is that of Eclosion hormone from Manduca sexta (Tobacco hawkmoth).